Reading from the N-terminus, the 316-residue chain is Thioredoxin reductase (316 aa).

Glutamate 36–glutamine 43 contacts FAD. A disulfide bridge links cysteine 135 with cysteine 138. Residue aspartate 278–isoleucine 287 participates in FAD binding.

This sequence belongs to the class-II pyridine nucleotide-disulfide oxidoreductase family. In terms of assembly, homodimer. FAD serves as cofactor.

It localises to the cytoplasm. It catalyses the reaction [thioredoxin]-dithiol + NADP(+) = [thioredoxin]-disulfide + NADPH + H(+). This Bacillus subtilis (strain 168) protein is Thioredoxin reductase (trxB).